We begin with the raw amino-acid sequence, 1696 residues long: E3 ubiquitin-protein ligase listerin (1696 aa).

HEAT repeat units lie at residues 17–55 (RGVLPYWPRIYCKISLDLDRRVREATQQAFEQLILKVKK), 102–140 (FCKEEIMNVLLDHLLKETPDTLSDTQAVPIEDRESKYFR), 144–181 (CSLLALKRLLCMLPRSENSSLQERLAHLLSQSKFWKYS), 209–250 (AEAS…CWEH), 252–289 (NAQKGVLPKLWSVLREGGRGLATVIFPNLLPFISRVPT), 354–394 (LISD…KAES), 431–468 (EKNLAGVSGLLQVLQNPNCLLKVNKKKKAKIRFKGEGD), 542–580 (FPSIRVFQVLLQQSSEEDPKNLNSPDHDVTPRHKNPAVQ), 596–634 (EESDFLVDILYSVLFCCTDSSERKHLLDDMTKMNFKWSV), 921–958 (LCTASLLSKMALRLLEKEKSLKEEEIGVKINITVAEML), 992–1029 (MDLSVHLPGLLELLYNRSKEDGSLWSLTANRFIHKRGA), 1108–1148 (DLCQ…LIGL), 1150–1188 (VEMIRFLSILLKYLASSVSSLVDVDWDFIMCSMLAWLES), 1245–1282 (GIYSLMLPMLVRIAEEYKASETSHMSHVLKSLGRTLGY), 1307–1344 (DSLQSLLNTLAPLLLYRERSVQITVYHLLDKIMADLPG), 1371–1405 (VLAIQEDLVESILKEIPVGEFAVIEPLKEEFCFVL), and 1406–1442 (GYLLTWKLILTFFKAASSQLRALYSQYLRKTKSLNKL). The RING-type zinc-finger motif lies at 1645–1692 (CMICFSVIHGSNYSLPKKACRTCKKKFHSECLYKWFTSSNKSTCPLCR).

This sequence belongs to the LTN1 family. In terms of assembly, component of the ribosome quality control complex (RQC), composed of at least the E3 ubiquitin ligase LTN1 and NEMF associated with the 60S ribosomal subunit. The complex probably also contains TCF25 as well as VCP/p97 and its ubiquitin-binding cofactors.

It localises to the cytoplasm. Its subcellular location is the cytosol. It carries out the reaction S-ubiquitinyl-[E2 ubiquitin-conjugating enzyme]-L-cysteine + [acceptor protein]-L-lysine = [E2 ubiquitin-conjugating enzyme]-L-cysteine + N(6)-ubiquitinyl-[acceptor protein]-L-lysine.. The protein operates within protein modification; protein ubiquitination. E3 ubiquitin-protein ligase component of the ribosome quality control complex (RQC), a ribosome-associated complex that mediates ubiquitination and extraction of incompletely synthesized nascent chains for proteasomal degradation. Within the RQC complex, LTN1 is recruited to stalled 60S ribosomal subunits by NEMF and mediates ubiquitination of stalled nascent chains. Ubiquitination leads to VCP/p97 recruitment for extraction and degradation of the incomplete translation product. The sequence is that of E3 ubiquitin-protein ligase listerin (ltn1) from Xenopus tropicalis (Western clawed frog).